We begin with the raw amino-acid sequence, 606 residues long: MVQGGSSISIRKKNFCIIAHIDHGKSTLADRFIQKAKIISDRDFKSQMLDSMDIERERGITIKSQAVTITYKSNDGDFYELNFVDTPGHVDFSYEVSRAISSCEGALLLIDASQGIQAQTVSNFYMAFEHDLEIIPVINKIDLPNANVDFVKKQIKNDLGLNEEIAISISAKNGIGIDDLLEAICKYVPSPRGSIKDPLRALIFDSHYDSYRGVVVHFRIFEGQIKMGDKIRLMHTNSEHLIEEIGIFKISLERKDTLEAGDVGYFIAGIKNISDVKIGDTVTLCDFPALSPLEGFKEVKPVVFSSVYPVDANQYDDLLKAMDRLKLNDASLTFEKDSSSALGHGFKCGFLGLLHLEVIQERIEREFNLNVILTSPSVRYKIIPKKGESYFIETPEQFPGNEAIESVLEPYIKANIIVPTEFLGNIMSVCLLKRGVQTNLIYLDTKRVELIYKMPLSEILFDFYDKIKSVSRGYASFDYELLDYEYTDLVRLDILVNGDRVDALSQLVFKDSARTKAIGICKKLKDEIARQQFRIAIQGAIGSNVIARETISPVRKDVTAKCYGGDITRKRKLLEKQKEGKKRMKMVGNVEIPQSAFLAVLKSNDN.

The region spanning 10 to 192 (IRKKNFCIIA…AICKYVPSPR (183 aa)) is the tr-type G domain. Residues 22–27 (DHGKST) and 139–142 (NKID) each bind GTP.

Belongs to the TRAFAC class translation factor GTPase superfamily. Classic translation factor GTPase family. LepA subfamily.

The protein localises to the cell inner membrane. It carries out the reaction GTP + H2O = GDP + phosphate + H(+). Its function is as follows. Required for accurate and efficient protein synthesis under certain stress conditions. May act as a fidelity factor of the translation reaction, by catalyzing a one-codon backward translocation of tRNAs on improperly translocated ribosomes. Back-translocation proceeds from a post-translocation (POST) complex to a pre-translocation (PRE) complex, thus giving elongation factor G a second chance to translocate the tRNAs correctly. Binds to ribosomes in a GTP-dependent manner. The protein is Elongation factor 4 of Borreliella burgdorferi (strain ATCC 35210 / DSM 4680 / CIP 102532 / B31) (Borrelia burgdorferi).